We begin with the raw amino-acid sequence, 285 residues long: Orotidine 5'-phosphate decarboxylase (285 aa).

Substrate is bound by residues aspartate 40, 62–64 (KTH), 93–102 (DRKFVDIGST), tyrosine 235, and arginine 253. The active-site Proton donor is the lysine 95.

It belongs to the OMP decarboxylase family.

The catalysed reaction is orotidine 5'-phosphate + H(+) = UMP + CO2. It functions in the pathway pyrimidine metabolism; UMP biosynthesis via de novo pathway; UMP from orotate: step 2/2. The protein is Orotidine 5'-phosphate decarboxylase (URA3) of Paracoccidioides brasiliensis.